The following is a 343-amino-acid chain: MATLNELAELIGGEVVGDGSVVLNRMAPIESAGPGDITFVANPKYLAKLKDTTASAVIVKAGIECPGVNLLICANPYLAFAKVLTALHAQRPAPQGVMDGAWVDPSAELGADVTVHPGCVVGKNVRVGRGTILYPGVVLYDDVQVGEDCLVHAGVLVREQCRLGNRVVVQPGAVIGSDGFGFAPDGKSYYKIPQVGIVAIEDDVEVGANVCIDRAAMGVTLIKRGTKIDNLVQIAHNVSIGEDTILVAQVGIAGSSKVGDHCTLGGQVGVSGHLKIGDNTMVGAQSGIISDLPAGQVFSGTPTMPHREWLKASASMRSLPAMRKTVSNLQKRIEELEKLIKER.

His236 serves as the catalytic Proton acceptor.

The protein belongs to the transferase hexapeptide repeat family. LpxD subfamily. Homotrimer.

The enzyme catalyses a UDP-3-O-[(3R)-3-hydroxyacyl]-alpha-D-glucosamine + a (3R)-hydroxyacyl-[ACP] = a UDP-2-N,3-O-bis[(3R)-3-hydroxyacyl]-alpha-D-glucosamine + holo-[ACP] + H(+). The protein operates within bacterial outer membrane biogenesis; LPS lipid A biosynthesis. Its function is as follows. Catalyzes the N-acylation of UDP-3-O-acylglucosamine using 3-hydroxyacyl-ACP as the acyl donor. Is involved in the biosynthesis of lipid A, a phosphorylated glycolipid that anchors the lipopolysaccharide to the outer membrane of the cell. The polypeptide is UDP-3-O-acylglucosamine N-acyltransferase (Syntrophotalea carbinolica (strain DSM 2380 / NBRC 103641 / GraBd1) (Pelobacter carbinolicus)).